Consider the following 454-residue polypeptide: MNLHEKKVLVVGAGRSGLAAVKRLKALGARIVLTDQKELAQLSGISELGLPDGQLVLGHIPQWHEVASEVIVLSPGVSPKLPFIQEGIAQGALIWSEVELALRDHPAFKIGVTGTNGKTTTTTLIGELAKRTGRPTLVAGNIGVALSDQVEDLDGEGIIVAELSSFQLEWVDSLRMNVGILLNVTPDHLDRHGTLDNYLAAKARIFEKQSPSDCAILNWDDARVRALAPHLKARVVFFSPTSLLAEGYGVRGDEVVLAEGGKITPIIARGELQLRGSHNLENIMAAIAAVRELGLSWEEITQGLRDFKGVEHRQEVVGTYEGILFINDSKGTNPDASEKALYAFEEPIVLIAGGKNKGLDFHDFMKTIKKQVKSLVLVGTAAAEMEQAAKDTGIQNYLRAGTFAEAVELAIAEAEPGDVVLLSPACTSWDMFKSYEERGEFFKELVRRHYREPI.

Residue 114–120 (GTNGKTT) participates in ATP binding.

This sequence belongs to the MurCDEF family.

It localises to the cytoplasm. The catalysed reaction is UDP-N-acetyl-alpha-D-muramoyl-L-alanine + D-glutamate + ATP = UDP-N-acetyl-alpha-D-muramoyl-L-alanyl-D-glutamate + ADP + phosphate + H(+). Its pathway is cell wall biogenesis; peptidoglycan biosynthesis. Cell wall formation. Catalyzes the addition of glutamate to the nucleotide precursor UDP-N-acetylmuramoyl-L-alanine (UMA). The chain is UDP-N-acetylmuramoylalanine--D-glutamate ligase from Desulfitobacterium hafniense (strain Y51).